The sequence spans 217 residues: Putative thymidylate synthase (217 aa).

C139 is a catalytic residue.

It belongs to the thymidylate synthase family. Archaeal-type ThyA subfamily. As to quaternary structure, monomer.

The protein localises to the cytoplasm. It participates in pyrimidine metabolism; dTTP biosynthesis. May catalyze the biosynthesis of dTMP using an unknown cosubstrate. This chain is Putative thymidylate synthase, found in Methanosarcina mazei (strain ATCC BAA-159 / DSM 3647 / Goe1 / Go1 / JCM 11833 / OCM 88) (Methanosarcina frisia).